Here is a 247-residue protein sequence, read N- to C-terminus: Adenylate kinase (247 aa).

42–47 (GAGKGT) is a binding site for ATP. Residues 62 to 91 (ATGDMLRAQVTAKTELGVQAKKIMDQGGLV) are NMP. AMP-binding positions include threonine 63, arginine 68, 89–91 (GLV), 118–121 (GFPR), and glutamine 125. The LID stretch occupies residues 159-196 (GRLVHPASGRSYHKLFNPPKKEMTDDQTGEPLVQRSDD). Residues arginine 160 and 169 to 170 (SY) contribute to the ATP site. The segment at 169–191 (SYHKLFNPPKKEMTDDQTGEPLV) is disordered. AMP contacts are provided by arginine 193 and arginine 204. Glutamine 232 serves as a coordination point for ATP.

This sequence belongs to the adenylate kinase family. AK2 subfamily. Monomer.

The protein resides in the cytoplasm. Its subcellular location is the cytosol. It is found in the mitochondrion intermembrane space. It carries out the reaction AMP + ATP = 2 ADP. In terms of biological role, catalyzes the reversible transfer of the terminal phosphate group between ATP and AMP. Plays an important role in cellular energy homeostasis and in adenine nucleotide metabolism. Adenylate kinase activity is critical for regulation of the phosphate utilization and the AMP de novo biosynthesis pathways. The sequence is that of Adenylate kinase from Meyerozyma guilliermondii (strain ATCC 6260 / CBS 566 / DSM 6381 / JCM 1539 / NBRC 10279 / NRRL Y-324) (Yeast).